A 507-amino-acid chain; its full sequence is DNA replication licensing factor MCM6 (507 aa).

One can recognise an MCM domain in the interval 32–239; the sequence is LYHNLCTSLF…TDYAIARRIV (208 aa). ATP-binding residues include His-45, Ser-85, Thr-86, Ala-87, Lys-88, Ser-89, and Asn-190. An Arginine finger motif is present at residues 214 to 217; the sequence is SRFD. Residues Arg-305 and Glu-308 each contribute to the ADP site. At Lys-329 the chain carries N6-acetyllysine. The segment at 365–392 is disordered; that stretch reads GPGGINGHADSPAPVNGFNGSGEDASQE. Ser-375, Ser-390, and Ser-448 each carry phosphoserine. A Phosphothreonine modification is found at Thr-477.

It belongs to the MCM family. In terms of assembly, component of the MCM2-7 complex. The complex forms a toroidal hexameric ring with the proposed subunit order MCM2-MCM6-MCM4-MCM7-MCM3-MCM5. Component of the CMG helicase complex, a hexameric ring of related MCM2-7 subunits stabilized by CDC45 and the tetrameric GINS complex. May interact with MCM10. Interacts with TIPIN. Interacts with CDT1. Interacts with MCMBP. Interacts with DDI2. O-glycosylated (O-GlcNAcylated), in a cell cycle-dependent manner.

It localises to the nucleus. The protein resides in the chromosome. It carries out the reaction ATP + H2O = ADP + phosphate + H(+). In terms of biological role, acts as a component of the MCM2-7 complex (MCM complex) which is the replicative helicase essential for 'once per cell cycle' DNA replication initiation and elongation in eukaryotic cells. Core component of CDC45-MCM-GINS (CMG) helicase, the molecular machine that unwinds template DNA during replication, and around which the replisome is built. The active ATPase sites in the MCM2-7 ring are formed through the interaction surfaces of two neighboring subunits such that a critical structure of a conserved arginine finger motif is provided in trans relative to the ATP-binding site of the Walker A box of the adjacent subunit. The six ATPase active sites, however, are likely to contribute differentially to the complex helicase activity. The protein is DNA replication licensing factor MCM6 (Mcm6) of Rattus norvegicus (Rat).